The primary structure comprises 246 residues: Putative KilA-N domain-containing protein L33 (246 aa).

Residues 20-129 form the KilA-N domain; that stretch reads RYTKCQYCDI…AKVSLWIEEW (110 aa).

In Acanthamoeba polyphaga mimivirus (APMV), this protein is Putative KilA-N domain-containing protein L33.